Reading from the N-terminus, the 81-residue chain is Photosystem I iron-sulfur center (81 aa).

4Fe-4S ferredoxin-type domains follow at residues 2–31 and 39–68; these read SHTV…MVPW and IASS…IRVY. Positions 11, 14, 17, 21, 48, 51, 54, and 58 each coordinate [4Fe-4S] cluster.

As to quaternary structure, the cyanobacterial PSI reaction center is composed of one copy each of PsaA,B,C,D,E,F,I,J,K,L,M and X, and forms trimeric complexes. The cofactor is [4Fe-4S] cluster.

Its subcellular location is the cellular thylakoid membrane. It catalyses the reaction reduced [plastocyanin] + hnu + oxidized [2Fe-2S]-[ferredoxin] = oxidized [plastocyanin] + reduced [2Fe-2S]-[ferredoxin]. Its function is as follows. Apoprotein for the two 4Fe-4S centers FA and FB of photosystem I (PSI); essential for photochemical activity. FB is the terminal electron acceptor of PSI, donating electrons to ferredoxin. The C-terminus interacts with PsaA/B/D and helps assemble the protein into the PSI complex. Required for binding of PsaD and PsaE to PSI. PSI is a plastocyanin/cytochrome c6-ferredoxin oxidoreductase, converting photonic excitation into a charge separation, which transfers an electron from the donor P700 chlorophyll pair to the spectroscopically characterized acceptors A0, A1, FX, FA and FB in turn. This Mastigocladus laminosus (Fischerella sp.) protein is Photosystem I iron-sulfur center.